The following is a 453-amino-acid chain: Plasmepsin II (453 aa).

Over 1 to 37 the chain is Cytoplasmic; it reads MDITVREHDFKHGFIKSNSTFDGLNIDNSKNKKKIQK. A propeptide spanning residues 1–124 is cleaved from the precursor; sequence MDITVREHDF…SGLTKTNYLG (124 aa). The chain crosses the membrane as a helical; Signal-anchor for type II membrane protein span at residues 38 to 58; the sequence is GFQILYVLLFCSVMCGLFYYV. The Lumenal segment spans residues 59–453; the sequence is YENVWLQRDN…VGIALAKKNL (395 aa). The Peptidase A1 domain occupies 140–447; that stretch reads FYGDAEVGDN…DYDNQSVGIA (308 aa). Residue D158 is part of the active site. Residues C171 and C176 are joined by a disulfide bond. The active site involves D338. The cysteines at positions 373 and 409 are disulfide-linked.

It belongs to the peptidase A1 family. In terms of assembly, component of the hemozoin formation complex (HFC) composed of falcipains FP2A and/or FP2B, plasmepsins PMII, PMIII/HAP and PMIV, heme detoxifying protein HDP and falcilysin FLN. The HFC complex is involved in hemoglobin degradation and detoxification of heme in the food vacuole during the asexual blood stage. In terms of processing, not N-glycosylated. Proteolytically cleaved into the soluble active mature form in the digestive vacuole by cysteine protease falcipains; the process begins at the early ring stage. Proteolysis requires an acidic environment. In absence of falcipains, autoprocessing may serve as an alternate activation system.

The protein resides in the membrane. It is found in the vacuole lumen. It localises to the vacuole membrane. The catalysed reaction is Hydrolysis of the bonds linking certain hydrophobic residues in hemoglobin or globin. Also cleaves small molecules substrates such as Ala-Leu-Glu-Arg-Thr-Phe-|-Phe(NO2)-Ser-Phe-Pro-Thr.. With respect to regulation, inhibited by pepstatin A. Inhibited by KNI derived compounds (KNI-10742, 10743, 10395, 10333, and 10343). During the asexual blood stage, participates in initial cleavage of native host hemoglobin (Hb) resulting in Hb denaturation. May cleave preferentially denatured hemoglobin that has been cleaved by PMI. Digestion of host Hb is an essential step which provides the parasite with amino acids for protein synthesis, and regulates osmolarity. The polypeptide is Plasmepsin II (Plasmodium falciparum (isolate 3D7)).